The chain runs to 2957 residues: Toxin PAU_02230 (2957 aa).

The disordered stretch occupies residues 949–968; the sequence is TSVSPAETAQSTPEPLSDFA. A membrane localization domain that interacts with the inner leaflet of the plasma membrane region spans residues 2115-2144; sequence EWFKHSETGLKGGGPIDDIRKYIARKSAIK. A tyrosine glycosyltransferase PaToxG region spans residues 2115 to 2449; it reads EWFKHSETGL…TSTIVTPLAP (335 aa). UDP-N-acetyl-alpha-D-glucosamine-binding positions include 2169 to 2171 and 2259 to 2260; these read IWI and SD. A divalent metal cation contacts are provided by Asp2276 and Asp2278. Residues 2276 to 2279 carry the DxDD motif motif; it reads DIDD. Asn2312 contacts UDP-N-acetyl-alpha-D-glucosamine. The interval 2450–2672 is sseI-like deamidase PaToxD; the sequence is KTEMLPPVPS…NYSVNPTAEN (223 aa). Catalysis depends on for deamidase activity residues Cys2509, His2547, and Asp2562. Residues 2667–2705 form a disordered region; it reads NPTAENLSPPPPPPIPSHGQVPKTVTPPPPPMRSPLSLS.

It depends on a divalent metal cation as a cofactor.

Its subcellular location is the secreted. It is found in the host cell membrane. It catalyses the reaction L-tyrosyl-[protein] + UDP-N-acetyl-alpha-D-glucosamine = O-(N-acetyl-alpha-D-glucosaminyl)-L-tyrosyl-[protein] + UDP + H(+). It carries out the reaction L-glutaminyl-[protein] + H2O = L-glutamyl-[protein] + NH4(+). Its function is as follows. Toxin that acts on host cells by modifying Rho proteins by tyrosine GlcNAcylation and heterotrimeric G alpha proteins by deamidation. Catalyzes the mono-O-GlcNAcylation of small GTPases of the Rho family (RhoA, RhoB, RhoC, Rac1, Rac2, Rac3, Cdc42) in eukaryotic host cells at the conserved tyrosine residue located in the switch I region (Tyr-32/34), using UDP-N-acetylglucosamine (UDP-GlcNAc) as the sugar donor; other GTPases of the Rho, Ras or Rab families are not substrates. Tyrosine glycosylation inhibits Rho activation and prevents interaction with downstream effectors, resulting in actin disassembly, inhibition of phagocytosis, cell rounding, and toxicity toward insects and mammalian cells. Also catalyzes the deamidation of the catalytic glutamine in heterotrimeric G alpha proteins (Gi, Gq/11), which blocks GTP hydrolysis and arrests the G proteins in a permanent active state leading to activation of Rho GTPases. Thus, PaTox hijacks host GTPase signaling in a bidirectional manner by deamidation-induced activation and glycosylation-induced inactivation of GTPases. The protein is Toxin PAU_02230 of Photorhabdus asymbiotica subsp. asymbiotica (strain ATCC 43949 / 3105-77) (Xenorhabdus luminescens (strain 2)).